The following is a 276-amino-acid chain: Rhomboid protease GlpG homolog (276 aa).

6 helical membrane-spanning segments follow: residues 94–114 (GPLT…MSII), 142–162 (LLLH…WYLA), 168–188 (SVGS…GGVI), 192–212 (IAGP…GYVW), 225–245 (LPRG…LGLF), and 252–272 (ADLV…TLHA).

The protein belongs to the peptidase S54 family.

It is found in the cell inner membrane. The chain is Rhomboid protease GlpG homolog (glpG) from Cronobacter sakazakii (strain ATCC BAA-894) (Enterobacter sakazakii).